A 590-amino-acid chain; its full sequence is DELLA protein GAI1 (590 aa).

Over residues M1 to H10 the composition is skewed to basic residues. The tract at residues M1 to P28 is disordered. The DELLA motif signature appears at D35–A39. A disordered region spans residues H153 to A182. The GRAS domain occupies V205–Q575. Residues I212–I266 are leucine repeat I (LRI). The segment at Q284–G349 is VHIID. Residues V315–D319 carry the VHIID motif. The leucine repeat II (LRII) stretch occupies residues E363 to S395. The segment at V405–N496 is PFYRE. The short motif at L413 to L417 is the LXXLL motif element. The interval A499–Q575 is SAW.

The protein belongs to the GRAS family. DELLA subfamily. Post-translationally, phosphorylated. In terms of processing, ubiquitinated. Upon GA application it is ubiquitinated, leading to its subsequent degradation.

The protein localises to the nucleus. Functionally, probable transcriptional regulator that acts as a repressor of the gibberellin (GA) signaling pathway. Probably acts by participating in large multiprotein complexes that repress transcription of GA-inducible genes. Upon GA application, it is degraded by the proteasome, allowing the GA signaling pathway. The protein is DELLA protein GAI1 (GAI1) of Vitis vinifera (Grape).